Consider the following 38-residue polypeptide: Large ribosomal subunit protein bL36 (38 aa).

It belongs to the bacterial ribosomal protein bL36 family.

This is Large ribosomal subunit protein bL36 from Lactobacillus acidophilus (strain ATCC 700396 / NCK56 / N2 / NCFM).